Reading from the N-terminus, the 175-residue chain is Gamma-crystallin-1 (175 aa).

2 consecutive Beta/gamma crystallin 'Greek key' domains span residues 2-40 and 41-83; these read GKIFFYEERNFQGRHYECGSDYSDLSSYFNRCNSIRVEG and GNWI…RFLP. The tract at residues 84-88 is connecting peptide; sequence NYQGQ. Beta/gamma crystallin 'Greek key' domains lie at 89 to 129 and 130 to 172; these read YKMR…NVFD and GHWM…RRVY.

The protein belongs to the beta/gamma-crystallin family. Monomer.

In terms of biological role, crystallins are the dominant structural components of the vertebrate eye lens. This is Gamma-crystallin-1 (cryg1) from Xenopus laevis (African clawed frog).